The chain runs to 86 residues: Muscarinic toxin 38 (86 aa).

A signal peptide spans 1-21 (MKTLLLTLVVVTIVCLDLGYT). Intrachain disulfides connect cysteine 24/cysteine 45, cysteine 38/cysteine 63, cysteine 67/cysteine 78, and cysteine 79/cysteine 84.

The protein belongs to the three-finger toxin family. Short-chain subfamily. Aminergic toxin sub-subfamily. As to quaternary structure, monomer. Expressed by the venom gland.

It localises to the secreted. In terms of biological role, binds to the muscarinic acetylcholine receptor (CHRM). The chain is Muscarinic toxin 38 from Ophiophagus hannah (King cobra).